A 90-amino-acid polypeptide reads, in one-letter code: Small ribosomal subunit protein bS16 (90 aa).

It belongs to the bacterial ribosomal protein bS16 family.

This Brevibacillus brevis (strain 47 / JCM 6285 / NBRC 100599) protein is Small ribosomal subunit protein bS16.